The chain runs to 469 residues: Regulator of G-protein signaling 7 (469 aa).

One can recognise a DEP domain in the interval 37–112 (EKNGIPIRTV…DDGTFYRFQT (76 aa)). A phosphoserine mark is found at Ser229 and Ser241. The segment at 236–255 (DIRSHSPTHTPTPETKPPTE) is disordered. A Phosphothreonine modification is found at Thr243. The G protein gamma domain maps to 255-316 (EDELHQQIKY…LSDDTTFWEL (62 aa)). The RGS domain maps to 333-448 (GMDEALKDPV…IRSSAYQELL (116 aa)). At Ser434 the chain carries Phosphoserine.

In terms of assembly, interacts with GNB5, forming the RGS7-GNB5 complex. Interacts with GPR158; promotes the GTPase activator activity of the RGS7-GNB5 complex in absence of glycine, in contrast GTPase activator activity of the RGS7-GNB5 complex is inhibited in presence of glycine. Interacts with GPR179. Interacts with PKD1; this prevents rapid proteasomal degradation. Interacts with RGS7BP, leading to regulate the subcellular location of the heterodimer formed with GNB5. Interacts (phosphorylated form) with 14-3-3 protein YWHAQ. Interacts with SNAPIN. Interacts with GNAI1. Interacts with GNAO1, GNAI3 and GNAZ. In terms of processing, palmitoylated. Post-translationally, ubiquitinated, leading to rapid proteasomal degradation. Phosphorylation and subsequent interaction with 14-3-3 proteins inhibits GAP activity. As to expression, detected in brain (at protein level).

It localises to the cytoplasm. It is found in the cytosol. Its subcellular location is the cell membrane. The protein resides in the membrane. In terms of biological role, GTPase activator component of the RGS7-GNB5 complex that regulates G protein-coupled receptor signaling cascades. The RGS7-GNB5 complex acts as an inhibitor signal transduction by promoting the GTPase activity of G protein alpha subunits, such as GNAO1, thereby driving them into their inactive GDP-bound form. May play a role in synaptic vesicle exocytosis. Glycine-dependent regulation of the RGS7-GNB5 complex by GPR158 affects mood and cognition via its ability to regulate neuronal excitability in L2/L3 pyramidal neurons of the prefrontal cortex. Modulates the activity of potassium channels that are activated by GNAO1 in response to muscarinic acetylcholine receptor M2/CHRM2 signaling. The sequence is that of Regulator of G-protein signaling 7 (Rgs7) from Mus musculus (Mouse).